Consider the following 384-residue polypeptide: Multidrug/solvent efflux pump periplasmic linker protein MepA (384 aa).

An N-terminal signal peptide occupies residues 1–22 (MQFKPAVTALVSAVALATLLSG). Residue Cys23 is the site of N-palmitoyl cysteine attachment. A lipid anchor (S-diacylglycerol cysteine) is attached at Cys23. Residues 115-155 (LAERYKQLIDEQAVSKQEYDDANAKRLQAEASLKSAQIDLR) adopt a coiled-coil conformation. The interval 362–384 (ATNVKKPAGPDQANAAKADAKAE) is disordered. Low complexity predominate over residues 368-378 (PAGPDQANAAK).

Belongs to the membrane fusion protein (MFP) (TC 8.A.1) family.

It localises to the cell inner membrane. The periplasmic linker protein component of an organic solvent and antibiotic efflux pump; confers resistance to toluene, hexane, p-xylene, ampicillin, penicillin G, erythromycin, novobiocin and tetracycline. The sequence is that of Multidrug/solvent efflux pump periplasmic linker protein MepA (mepA) from Pseudomonas putida (Arthrobacter siderocapsulatus).